A 304-amino-acid polypeptide reads, in one-letter code: 6-dehydroglucose reductase (304 aa).

Residues Trp-28, Arg-29, and Asp-56 each coordinate NADP(+). Tyr-61 (proton donor) is an active-site residue. Residues Tyr-61, His-133, and Arg-134 each contribute to the D-glucose site. Ser-163, Asn-164, Gln-185, Ser-215, Leu-217, Gly-219, Gly-268, Ser-269, Gln-270, and Arg-274 together coordinate NADP(+).

Belongs to the aldo/keto reductase family.

The catalysed reaction is D-glucose + NADP(+) = 6-dehydro-D-glucose + NADPH + H(+). Its function is as follows. Part of the alkanesulfonate monooxygenase (sulfo-ASMO) pathway, a D-sulfoquinovose degradation pathway that enables the complete utilization of all carbons within sulfoquinovose (SQ) with concomitant production of inorganic sulfite. Catalyzes the NADP-dependent reduction of 6-dehydro-D-glucose to D-glucose. Can also catalyze the reversible reaction, the formation of 6-dehydro-D-glucose from D-glucose in the presence of NADP(+). In Novosphingobium aromaticivorans (strain ATCC 700278 / DSM 12444 / CCUG 56034 / CIP 105152 / NBRC 16084 / F199), this protein is 6-dehydroglucose reductase.